A 250-amino-acid polypeptide reads, in one-letter code: Adenosylcobinamide-GDP ribazoletransferase (250 aa).

6 consecutive transmembrane segments (helical) span residues 32-52 (KGII…MVAY), 59-79 (LAHS…TGGL), 113-133 (GVLA…GLGE), 136-156 (IYWG…YGCY), 185-205 (LTFI…LLPI), and 230-250 (CELT…AGLF).

This sequence belongs to the CobS family. It depends on Mg(2+) as a cofactor.

It is found in the cell membrane. It carries out the reaction alpha-ribazole + adenosylcob(III)inamide-GDP = adenosylcob(III)alamin + GMP + H(+). The catalysed reaction is alpha-ribazole 5'-phosphate + adenosylcob(III)inamide-GDP = adenosylcob(III)alamin 5'-phosphate + GMP + H(+). It participates in cofactor biosynthesis; adenosylcobalamin biosynthesis; adenosylcobalamin from cob(II)yrinate a,c-diamide: step 7/7. Its function is as follows. Joins adenosylcobinamide-GDP and alpha-ribazole to generate adenosylcobalamin (Ado-cobalamin). Also synthesizes adenosylcobalamin 5'-phosphate from adenosylcobinamide-GDP and alpha-ribazole 5'-phosphate. This chain is Adenosylcobinamide-GDP ribazoletransferase, found in Alkaliphilus metalliredigens (strain QYMF).